The following is a 424-amino-acid chain: MTAIIDIIGREILDSRGNPTVEVDVHLEDGSFGRAAVPSGASTGAHEAVELRDGGTRYLGKGVERAVDAVNGEIFEAIGGLDAENQIQIDKTMIELDGTSNKSRLGANAILGVSLAIAKAAAEAAGLPLYRYVGGPNAHLLPVPMMNIINGGAHADNPIDFQEFMIMPVGAETLKDAVRMGSEVFHTLKKQLAAEGHNTNVGDEGGFAPGLASAPAALDFIMKSIEKAGYKPGEDMYVALDCASTEFFKDGKYVLEGEGRTLEPGAMAEYLAELAGKYPIISIEDGMAEDDWDGWKALTDLIGNKCQLVGDDLFVTNSARLRDGIKMGVANSILVKVNQIGSLSETLDAVETAHKARYTAVMSHRSGETEDSTIADLAVATNCGQIKTGSLARSDRLAKYNQLIRIEEQLGLQAAYAGRSILRG.

Gln162 is a (2R)-2-phosphoglycerate binding site. Catalysis depends on Glu204, which acts as the Proton donor. Positions 241, 284, and 311 each coordinate Mg(2+). Lys336, Arg365, Ser366, and Lys387 together coordinate (2R)-2-phosphoglycerate. Catalysis depends on Lys336, which acts as the Proton acceptor.

This sequence belongs to the enolase family. Mg(2+) serves as cofactor.

The protein resides in the cytoplasm. It is found in the secreted. The protein localises to the cell surface. The enzyme catalyses (2R)-2-phosphoglycerate = phosphoenolpyruvate + H2O. Its pathway is carbohydrate degradation; glycolysis; pyruvate from D-glyceraldehyde 3-phosphate: step 4/5. Its function is as follows. Catalyzes the reversible conversion of 2-phosphoglycerate (2-PG) into phosphoenolpyruvate (PEP). It is essential for the degradation of carbohydrates via glycolysis. In Sinorhizobium fredii (strain NBRC 101917 / NGR234), this protein is Enolase.